A 92-amino-acid polypeptide reads, in one-letter code: MQKAVQLDVFGRVQGVGFRWTTKLVADRLGITGTVSNQPDGSVKIIAMGPDAILEQFIGAVKASPTPSGRVDRVVQTPLQDVSACHKFSVVG.

The Acylphosphatase-like domain maps to 4-92; it reads AVQLDVFGRV…SACHKFSVVG (89 aa). Active-site residues include R19 and N37.

This sequence belongs to the acylphosphatase family.

It carries out the reaction an acyl phosphate + H2O = a carboxylate + phosphate + H(+). The sequence is that of Acylphosphatase (acyP) from Latilactobacillus sakei subsp. sakei (strain 23K) (Lactobacillus sakei subsp. sakei).